A 372-amino-acid polypeptide reads, in one-letter code: Histidinol-phosphate aminotransferase (372 aa).

Lys229 bears the N6-(pyridoxal phosphate)lysine mark.

Belongs to the class-II pyridoxal-phosphate-dependent aminotransferase family. Histidinol-phosphate aminotransferase subfamily. Homodimer. Pyridoxal 5'-phosphate serves as cofactor.

The catalysed reaction is L-histidinol phosphate + 2-oxoglutarate = 3-(imidazol-4-yl)-2-oxopropyl phosphate + L-glutamate. It participates in amino-acid biosynthesis; L-histidine biosynthesis; L-histidine from 5-phospho-alpha-D-ribose 1-diphosphate: step 7/9. The polypeptide is Histidinol-phosphate aminotransferase (Bdellovibrio bacteriovorus (strain ATCC 15356 / DSM 50701 / NCIMB 9529 / HD100)).